The primary structure comprises 135 residues: Putative pre-16S rRNA nuclease (135 aa).

It belongs to the YqgF nuclease family.

The protein resides in the cytoplasm. Could be a nuclease involved in processing of the 5'-end of pre-16S rRNA. In Clostridium acetobutylicum (strain ATCC 824 / DSM 792 / JCM 1419 / IAM 19013 / LMG 5710 / NBRC 13948 / NRRL B-527 / VKM B-1787 / 2291 / W), this protein is Putative pre-16S rRNA nuclease.